Consider the following 194-residue polypeptide: Yellow fluorescent protein (194 aa).

Lumazine-binding repeat units lie at residues 1–98 (MFKG…SGGH) and 99–194 (ILSA…NQCW). Residue 179-183 (KVNVE) coordinates FMN.

As to quaternary structure, homodimer. Requires FMN as cofactor.

In terms of biological role, antenna protein that modulates the color of the bioluminescence emission of the luciferase. In the presence of YFP and only at temperatures below 20 degrees Celsius, luciferase exhibits a bimodal emission spectrum with a new peak at 545 nM (yellow), in addition to the one at 485 nM. The sequence is that of Yellow fluorescent protein (luxY) from Aliivibrio fischeri (Vibrio fischeri).